The chain runs to 675 residues: Polyphosphate kinase (675 aa).

Asparagine 42 contacts ATP. Residues arginine 372 and arginine 401 each contribute to the Mg(2+) site. The active-site Phosphohistidine intermediate is histidine 431. Residues tyrosine 464, arginine 558, and histidine 586 each coordinate ATP.

Belongs to the polyphosphate kinase 1 (PPK1) family. The cofactor is Mg(2+). In terms of processing, an intermediate of this reaction is the autophosphorylated ppk in which a phosphate is covalently linked to a histidine residue through a N-P bond.

It catalyses the reaction [phosphate](n) + ATP = [phosphate](n+1) + ADP. Its function is as follows. Catalyzes the reversible transfer of the terminal phosphate of ATP to form a long-chain polyphosphate (polyP). The protein is Polyphosphate kinase of Helicobacter pylori (strain J99 / ATCC 700824) (Campylobacter pylori J99).